A 631-amino-acid polypeptide reads, in one-letter code: Nucleoside triphosphatase I (631 aa).

A Helicase ATP-binding domain is found at 42-204; sequence FLGLDSMHSL…TMLVNLLRPG (163 aa). An ATP-binding site is contributed by 55–62; the sequence is HETGVGKT. The DEXH box signature appears at 141–144; sequence DECH. The region spanning 367–532 is the Helicase C-terminal domain; sequence KFIDVCLGIL…EFVQLFRVFK (166 aa). Residues 457-524 are binding to the cap-specific mRNA (nucleoside-2'-O-)-methyltransferase; sequence DIFILDMTWN…EIIQSKSKEF (68 aa).

It belongs to the helicase family. NPH I subfamily. Monomer. Interacts (via C-terminus) with RAP94/OPG109 (via N-terminus). Interacts with the cap-specific mRNA (nucleoside-2'-O-)-methyltransferase OPG102.

The protein resides in the virion. The catalysed reaction is a ribonucleoside 5'-triphosphate + H2O = a ribonucleoside 5'-diphosphate + phosphate + H(+). Functionally, DNA-dependent ATPase that acts as a 5' to 3' translocase on single-stranded DNA and thereby plays a role in transcription termination of viral early genes. Uses forward translocation in concert with the viral RNA polymerase RAP94/OPG109 subunit and the capping enzyme/VTF to catalyze release of UUUUUNU-containing nascent RNA from the elongation complex. In addition, acts as a positive elongation factor to assist transcription through problematic sequences. In Vaccinia virus (strain Copenhagen) (VACV), this protein is Nucleoside triphosphatase I (OPG123).